The sequence spans 62 residues: Protein DsrB (62 aa).

The protein belongs to the DsrB family.

The sequence is that of Protein DsrB from Enterobacter sp. (strain 638).